Here is a 145-residue protein sequence, read N- to C-terminus: Small ribosomal subunit protein eS19 (145 aa).

The segment at 120 to 145 (GGRRISENGQRDLDRIAAQTLEEDDE) is disordered. Over residues 123–134 (RISENGQRDLDR) the composition is skewed to basic and acidic residues.

It belongs to the eukaryotic ribosomal protein eS19 family. Component of the small ribosomal subunit. Mature ribosomes consist of a small (40S) and a large (60S) subunit. The 40S subunit contains about 32 different proteins and 1 molecule of RNA (18S). The 60S subunit contains 45 different proteins and 3 molecules of RNA (25S, 5.8S and 5S).

It is found in the cytoplasm. In terms of biological role, component of the ribosome, a large ribonucleoprotein complex responsible for the synthesis of proteins in the cell. The small ribosomal subunit (SSU) binds messenger RNAs (mRNAs) and translates the encoded message by selecting cognate aminoacyl-transfer RNA (tRNA) molecules. The large subunit (LSU) contains the ribosomal catalytic site termed the peptidyl transferase center (PTC), which catalyzes the formation of peptide bonds, thereby polymerizing the amino acids delivered by tRNAs into a polypeptide chain. The nascent polypeptides leave the ribosome through a tunnel in the LSU and interact with protein factors that function in enzymatic processing, targeting, and the membrane insertion of nascent chains at the exit of the ribosomal tunnel. RPS19A is required for proper maturation of the small (40S) ribosomal subunit. This is Small ribosomal subunit protein eS19 (RPS19A) from Candida albicans (strain SC5314 / ATCC MYA-2876) (Yeast).